A 202-amino-acid polypeptide reads, in one-letter code: Imidazoleglycerol-phosphate dehydratase (202 aa).

Belongs to the imidazoleglycerol-phosphate dehydratase family.

It localises to the cytoplasm. The catalysed reaction is D-erythro-1-(imidazol-4-yl)glycerol 3-phosphate = 3-(imidazol-4-yl)-2-oxopropyl phosphate + H2O. It functions in the pathway amino-acid biosynthesis; L-histidine biosynthesis; L-histidine from 5-phospho-alpha-D-ribose 1-diphosphate: step 6/9. The sequence is that of Imidazoleglycerol-phosphate dehydratase from Rhizobium etli (strain CIAT 652).